A 75-amino-acid chain; its full sequence is Probable pilin MJ1469 (75 aa).

A propeptide spanning residues 1 to 11 (MKPKKIISNKA) is cleaved from the precursor. The QXSXEXXXL signature appears at 12 to 20 (QISLELALL).

The N-terminus is cleaved by the prepilin peptidase EppA, which recognizes the class III signal sequence.

It localises to the secreted. Its subcellular location is the cell surface. The protein localises to the fimbrium. In Methanocaldococcus jannaschii (strain ATCC 43067 / DSM 2661 / JAL-1 / JCM 10045 / NBRC 100440) (Methanococcus jannaschii), this protein is Probable pilin MJ1469.